The sequence spans 113 residues: Large ribosomal subunit protein uL22 (113 aa).

The protein belongs to the universal ribosomal protein uL22 family. Part of the 50S ribosomal subunit.

In terms of biological role, this protein binds specifically to 23S rRNA; its binding is stimulated by other ribosomal proteins, e.g. L4, L17, and L20. It is important during the early stages of 50S assembly. It makes multiple contacts with different domains of the 23S rRNA in the assembled 50S subunit and ribosome. The globular domain of the protein is located near the polypeptide exit tunnel on the outside of the subunit, while an extended beta-hairpin is found that lines the wall of the exit tunnel in the center of the 70S ribosome. The polypeptide is Large ribosomal subunit protein uL22 (Thermus thermophilus (strain ATCC BAA-163 / DSM 7039 / HB27)).